Consider the following 332-residue polypeptide: L-lactate dehydrogenase A chain (332 aa).

Residues 29-57 (GAVG…VEDK) and Arg-99 contribute to the NAD(+) site. Substrate contacts are provided by Arg-106, Asn-138, and Arg-169. Residue Asn-138 participates in NAD(+) binding. His-193 (proton acceptor) is an active-site residue. A substrate-binding site is contributed by Thr-248.

It belongs to the LDH/MDH superfamily. LDH family. In terms of assembly, homotetramer.

The protein localises to the cytoplasm. It catalyses the reaction (S)-lactate + NAD(+) = pyruvate + NADH + H(+). It participates in fermentation; pyruvate fermentation to lactate; (S)-lactate from pyruvate: step 1/1. In terms of biological role, interconverts simultaneously and stereospecifically pyruvate and lactate with concomitant interconversion of NADH and NAD(+). In Caiman crocodilus apaporiensis (Rio Apaporis caiman), this protein is L-lactate dehydrogenase A chain (LDHA).